Here is a 512-residue protein sequence, read N- to C-terminus: Altronate oxidoreductase (512 aa).

26-37 is an NAD(+) binding site; that stretch reads VLQFGEGNFLRG.

Belongs to the mannitol dehydrogenase family. UxaB subfamily.

The enzyme catalyses D-altronate + NAD(+) = keto-D-tagaturonate + NADH + H(+). The protein operates within carbohydrate metabolism; pentose and glucuronate interconversion. This chain is Altronate oxidoreductase, found in Halalkalibacterium halodurans (strain ATCC BAA-125 / DSM 18197 / FERM 7344 / JCM 9153 / C-125) (Bacillus halodurans).